Consider the following 370-residue polypeptide: MLAPGSSPGQRGRLALQWRQVSWITCWIALYAVEALPTCPFSCKCDSRSLEVDCSGLGLTTVPPDVPAATRTLLLLNNKLSALPSWAFANLSSLQRLDLSNNFLDRLPRSIFGDLTNLTELQLRNNSIRTLDRDLLRHSPLLRHLDLSINGLAQLPPGLFDGLLALRSLSLRSNRLQNLDRLTFEPLANLQLLQVGDNPWECDCNLREFKHWMEWFSYRGGRLDQLACTLPKELRGKDMRMVPMEMFNYCSQLEDENSSAGLDIPGPPCTKASPEPAKPKPGAEPEPEPSTACPQKQRHRPASVRRAMGTVIIAGVVCGVVCIMMVVAAAYGCIYASLMAKYHRELKKRQPLMGDPEGEHEDQKQISSVA.

A signal peptide spans 1–35; the sequence is MLAPGSSPGQRGRLALQWRQVSWITCWIALYAVEA. The LRRNT domain occupies 36-68; it reads LPTCPFSCKCDSRSLEVDCSGLGLTTVPPDVPA. Over 36 to 310 the chain is Extracellular; that stretch reads LPTCPFSCKC…PASVRRAMGT (275 aa). 5 LRR repeats span residues 69-90, 93-114, 117-139, 141-162, and 165-186; these read ATRT…AFAN, SLQR…IFGD, NLTE…LRHS, LLRH…LFDG, and ALRS…TFEP. Asn-90 carries an N-linked (GlcNAc...) asparagine glycan. N-linked (GlcNAc...) asparagine glycosylation is found at Asn-117 and Asn-125. Residues 198-252 form the LRRCT domain; that stretch reads NPWECDCNLREFKHWMEWFSYRGGRLDQLACTLPKELRGKDMRMVPMEMFNYCSQ. An N-linked (GlcNAc...) asparagine glycan is attached at Asn-257. The interval 261–300 is disordered; that stretch reads GLDIPGPPCTKASPEPAKPKPGAEPEPEPSTACPQKQRHR. The helical transmembrane segment at 311–331 threads the bilayer; it reads VIIAGVVCGVVCIMMVVAAAY. Topologically, residues 332 to 370 are cytoplasmic; the sequence is GCIYASLMAKYHRELKKRQPLMGDPEGEHEDQKQISSVA. Residues 351–370 form a disordered region; that stretch reads PLMGDPEGEHEDQKQISSVA.

The protein resides in the membrane. The chain is Leucine-rich repeat and transmembrane domain-containing protein 2 (LRTM2) from Homo sapiens (Human).